We begin with the raw amino-acid sequence, 601 residues long: Glutathione-regulated potassium-efflux system protein KefB (601 aa).

Helical transmembrane passes span 5-25, 29-49, 55-75, 87-107, 115-135, 152-172, 177-197, 207-227, 230-250, 261-281, 284-304, 326-346, and 356-376; these read DLLLAGVLFLFAAVVAVPLAA, IGAVLGYLLAGIAIGPWGLGF, EILHFSELGVVFLMFIIGLEL, IFGVGAAQVLFSAVILGGLLM, AAVIGGIGLAMSSTAMALQLM, VLLFQDLAVIPALALVPLLAG, HFDWMKVGMKVLAFVGMLIGG, FIAASGVREVFTAATLLLVLG, LFMDALGLSMALGTFIAGILL, IAIDPFKGLLLGLFFISVGMA, LGVLYTHLLWVVVSVAVLVAV, FAGVLSQGGEFAFVLFSTAAS, and ALLLVTVTLSMMTTPLLMKLI. An RCK N-terminal domain is found at 400-518; the sequence is KPQVIVVGFG…QAGVTNFSRE (119 aa).

Belongs to the monovalent cation:proton antiporter 2 (CPA2) transporter (TC 2.A.37) family. KefB subfamily. As to quaternary structure, interacts with the regulatory subunit KefG.

It localises to the cell inner membrane. Pore-forming subunit of a potassium efflux system that confers protection against electrophiles. Catalyzes K(+)/H(+) antiport. The sequence is that of Glutathione-regulated potassium-efflux system protein KefB from Enterobacter sp. (strain 638).